The chain runs to 337 residues: Protein ABHD13 (337 aa).

A helical; Signal-anchor for type II membrane protein transmembrane segment spans residues Phe-37 to Leu-57. Active-site charge relay system residues include Ser-193, Asp-268, and His-298. N-linked (GlcNAc...) asparagine glycosylation is present at Asn-299.

It belongs to the serine esterase family.

It is found in the membrane. The polypeptide is Protein ABHD13 (Mus musculus (Mouse)).